Here is a 450-residue protein sequence, read N- to C-terminus: Phosphoglucosamine mutase (450 aa).

S101 serves as the catalytic Phosphoserine intermediate. Mg(2+) contacts are provided by S101, D240, D242, and D244. At S101 the chain carries Phosphoserine.

The protein belongs to the phosphohexose mutase family. The cofactor is Mg(2+). Post-translationally, activated by phosphorylation.

The enzyme catalyses alpha-D-glucosamine 1-phosphate = D-glucosamine 6-phosphate. Catalyzes the conversion of glucosamine-6-phosphate to glucosamine-1-phosphate. This chain is Phosphoglucosamine mutase, found in Streptococcus thermophilus (strain ATCC BAA-250 / LMG 18311).